The chain runs to 108 residues: Tubulin-specific chaperone A (108 aa).

Alanine 2 carries the post-translational modification N-acetylalanine.

This sequence belongs to the TBCA family. Supercomplex made of cofactors A to E. Cofactors A and D function by capturing and stabilizing tubulin in a quasi-native conformation. Cofactor E binds to the cofactor D-tubulin complex; interaction with cofactor C then causes the release of tubulin polypeptides that are committed to the native state. As to expression, widely expressed, but is most abundant in the testis.

The protein localises to the cytoplasm. It localises to the cytoskeleton. In terms of biological role, tubulin-folding protein; involved in the early step of the tubulin folding pathway. The chain is Tubulin-specific chaperone A (Tbca) from Mus musculus (Mouse).